We begin with the raw amino-acid sequence, 506 residues long: 2-isopropylmalate synthase (506 aa).

A Pyruvate carboxyltransferase domain is found at 4 to 266; it reads ILFMDTTLRD…EPSMTLKEIK (263 aa). Asp-13, His-201, His-203, and Asn-237 together coordinate Mn(2+). The regulatory domain stretch occupies residues 390-506; sequence NITQLQVHFV…KLKSFIQLVK (117 aa).

The protein belongs to the alpha-IPM synthase/homocitrate synthase family. LeuA type 1 subfamily. As to quaternary structure, homodimer. Mn(2+) is required as a cofactor.

The protein localises to the cytoplasm. It carries out the reaction 3-methyl-2-oxobutanoate + acetyl-CoA + H2O = (2S)-2-isopropylmalate + CoA + H(+). It functions in the pathway amino-acid biosynthesis; L-leucine biosynthesis; L-leucine from 3-methyl-2-oxobutanoate: step 1/4. Functionally, catalyzes the condensation of the acetyl group of acetyl-CoA with 3-methyl-2-oxobutanoate (2-ketoisovalerate) to form 3-carboxy-3-hydroxy-4-methylpentanoate (2-isopropylmalate). This chain is 2-isopropylmalate synthase, found in Bacillus anthracis (strain A0248).